A 312-amino-acid polypeptide reads, in one-letter code: DNA-directed RNA polymerase subunit alpha (312 aa).

An alpha N-terminal domain (alpha-NTD) region spans residues 1-226; sequence MIEFEKPNIT…EHFKVFMSTD (226 aa). Positions 243–312 are alpha C-terminal domain (alpha-CTD); that stretch reads NEKKLEMTIE…ELGLSLRQDD (70 aa).

The protein belongs to the RNA polymerase alpha chain family. In terms of assembly, homodimer. The RNAP catalytic core consists of 2 alpha, 1 beta, 1 beta' and 1 omega subunit. When a sigma factor is associated with the core the holoenzyme is formed, which can initiate transcription.

The catalysed reaction is RNA(n) + a ribonucleoside 5'-triphosphate = RNA(n+1) + diphosphate. Its function is as follows. DNA-dependent RNA polymerase catalyzes the transcription of DNA into RNA using the four ribonucleoside triphosphates as substrates. This Lactobacillus gasseri (strain ATCC 33323 / DSM 20243 / BCRC 14619 / CIP 102991 / JCM 1131 / KCTC 3163 / NCIMB 11718 / NCTC 13722 / AM63) protein is DNA-directed RNA polymerase subunit alpha.